A 150-amino-acid polypeptide reads, in one-letter code: Macrodomain Ter protein (150 aa).

This sequence belongs to the MatP family. In terms of assembly, homodimer.

It is found in the cytoplasm. Functionally, required for spatial organization of the terminus region of the chromosome (Ter macrodomain) during the cell cycle. Prevents early segregation of duplicated Ter macrodomains during cell division. Binds specifically to matS, which is a 13 bp signature motif repeated within the Ter macrodomain. In Erwinia tasmaniensis (strain DSM 17950 / CFBP 7177 / CIP 109463 / NCPPB 4357 / Et1/99), this protein is Macrodomain Ter protein.